Consider the following 744-residue polypeptide: Translation initiation factor IF-2, chloroplastic (744 aa).

Residues 113-146 are disordered; it reads NSEGSFKSGKQKKKEKGKHKQNVNKDIHHTKNNR. Basic residues predominate over residues 121-134; sequence GKQKKKEKGKHKQN. In terms of domain architecture, tr-type G spans 244-417; the sequence is NRAPIVTILG…CSLAEFINLK (174 aa). Residues 253–260 form a G1 region; it reads GHVDHGKT. Residue 253–260 participates in GTP binding; it reads GHVDHGKT. Residues 278 to 282 are G2; sequence GITQS. Positions 303–306 are G3; it reads DTPG. GTP contacts are provided by residues 303–307 and 357–360; these read DTPGH and NKID. The segment at 357-360 is G4; the sequence is NKID. The tract at residues 393–395 is G5; the sequence is SAL.

The protein belongs to the TRAFAC class translation factor GTPase superfamily. Classic translation factor GTPase family. IF-2 subfamily.

Its subcellular location is the plastid. The protein localises to the chloroplast. In terms of biological role, one of the essential components for the initiation of protein synthesis. Protects formylmethionyl-tRNA from spontaneous hydrolysis and promotes its binding to the 30S ribosomal subunits. Also involved in the hydrolysis of GTP during the formation of the 70S ribosomal complex. The sequence is that of Translation initiation factor IF-2, chloroplastic (infB) from Gracilaria tenuistipitata var. liui (Red alga).